A 446-amino-acid polypeptide reads, in one-letter code: Trigger factor (446 aa).

The 86-residue stretch at 163-248 (GDIVTIDFKG…VRGIKRKKLA (86 aa)) folds into the PPIase FKBP-type domain. A disordered region spans residues 423–446 (SKPVPPREQGAAGETAETAEATPA). The segment covering 432–446 (GAAGETAETAEATPA) has biased composition (low complexity).

It belongs to the FKBP-type PPIase family. Tig subfamily.

Its subcellular location is the cytoplasm. The enzyme catalyses [protein]-peptidylproline (omega=180) = [protein]-peptidylproline (omega=0). Involved in protein export. Acts as a chaperone by maintaining the newly synthesized protein in an open conformation. Functions as a peptidyl-prolyl cis-trans isomerase. In Moorella thermoacetica (strain ATCC 39073 / JCM 9320), this protein is Trigger factor.